The primary structure comprises 421 residues: Enolase (421 aa).

(2R)-2-phosphoglycerate is bound at residue Gln162. The Proton donor role is filled by Glu204. Mg(2+) is bound by residues Asp241, Glu284, and Asp311. (2R)-2-phosphoglycerate-binding residues include Lys336, Arg365, Ser366, and Lys387. The active-site Proton acceptor is the Lys336.

The protein belongs to the enolase family. Requires Mg(2+) as cofactor.

The protein resides in the cytoplasm. It localises to the secreted. It is found in the cell surface. The catalysed reaction is (2R)-2-phosphoglycerate = phosphoenolpyruvate + H2O. It functions in the pathway carbohydrate degradation; glycolysis; pyruvate from D-glyceraldehyde 3-phosphate: step 4/5. In terms of biological role, catalyzes the reversible conversion of 2-phosphoglycerate (2-PG) into phosphoenolpyruvate (PEP). It is essential for the degradation of carbohydrates via glycolysis. This is Enolase from Nitratiruptor sp. (strain SB155-2).